The following is a 368-amino-acid chain: DNA replication and repair protein RecF (368 aa).

30-37 (GKNGSGKT) provides a ligand contact to ATP.

This sequence belongs to the RecF family.

It is found in the cytoplasm. The RecF protein is involved in DNA metabolism; it is required for DNA replication and normal SOS inducibility. RecF binds preferentially to single-stranded, linear DNA. It also seems to bind ATP. The polypeptide is DNA replication and repair protein RecF (Marinomonas sp. (strain MWYL1)).